A 156-amino-acid polypeptide reads, in one-letter code: Glycine cleavage system H protein 2, mitochondrial (156 aa).

The N-terminal 23 residues, 1–23 (MACRLFWASRVASHLRISVAQRG), are a transit peptide targeting the mitochondrion. Residues 47 to 129 (KATFGITDHA…YEQGWIIKVE (83 aa)) enclose the Lipoyl-binding domain. Lysine 88 carries the post-translational modification N6-lipoyllysine. Phosphoserine is present on serine 131.

The protein belongs to the GcvH family. The glycine cleavage system is composed of four proteins: P, T, L and H. (R)-lipoate serves as cofactor.

It is found in the mitochondrion. The glycine decarboxylase (GDC) or glycine cleavage system catalyzes the degradation of glycine. The H protein shuttles the methylamine group of glycine from the P protein to the T protein. The sequence is that of Glycine cleavage system H protein 2, mitochondrial (GDH2) from Arabidopsis thaliana (Mouse-ear cress).